Consider the following 398-residue polypeptide: 1-deoxy-D-xylulose 5-phosphate reductoisomerase (398 aa).

Residues T10, G11, S12, I13, N38, and N124 each contribute to the NADPH site. 1-deoxy-D-xylulose 5-phosphate is bound at residue K125. E126 provides a ligand contact to NADPH. D150 provides a ligand contact to Mn(2+). 1-deoxy-D-xylulose 5-phosphate-binding residues include S151, E152, S176, and H199. Residue E152 coordinates Mn(2+). G205 contributes to the NADPH binding site. S212, N217, K218, and E221 together coordinate 1-deoxy-D-xylulose 5-phosphate. E221 is a binding site for Mn(2+).

It belongs to the DXR family. Mg(2+) serves as cofactor. The cofactor is Mn(2+).

It catalyses the reaction 2-C-methyl-D-erythritol 4-phosphate + NADP(+) = 1-deoxy-D-xylulose 5-phosphate + NADPH + H(+). The protein operates within isoprenoid biosynthesis; isopentenyl diphosphate biosynthesis via DXP pathway; isopentenyl diphosphate from 1-deoxy-D-xylulose 5-phosphate: step 1/6. In terms of biological role, catalyzes the NADPH-dependent rearrangement and reduction of 1-deoxy-D-xylulose-5-phosphate (DXP) to 2-C-methyl-D-erythritol 4-phosphate (MEP). In Rippkaea orientalis (strain PCC 8801 / RF-1) (Cyanothece sp. (strain PCC 8801)), this protein is 1-deoxy-D-xylulose 5-phosphate reductoisomerase.